A 93-amino-acid chain; its full sequence is UPF0728 protein C10orf53 (93 aa).

This sequence belongs to the UPF0728 family.

The sequence is that of UPF0728 protein C10orf53 (C10orf53) from Homo sapiens (Human).